The sequence spans 175 residues: ATP synthase subunit b (175 aa).

A helical transmembrane segment spans residues 20–40; sequence LIFWTAVTFVIVLVILKKIAW.

Belongs to the ATPase B chain family. In terms of assembly, F-type ATPases have 2 components, F(1) - the catalytic core - and F(0) - the membrane proton channel. F(1) has five subunits: alpha(3), beta(3), gamma(1), delta(1), epsilon(1). F(0) has four main subunits: a(1), b(2) and c(10-14). The alpha and beta chains form an alternating ring which encloses part of the gamma chain. F(1) is attached to F(0) by a central stalk formed by the gamma and epsilon chains, while a peripheral stalk is formed by the delta and b chains.

Its subcellular location is the cell inner membrane. Its function is as follows. F(1)F(0) ATP synthase produces ATP from ADP in the presence of a proton or sodium gradient. F-type ATPases consist of two structural domains, F(1) containing the extramembraneous catalytic core and F(0) containing the membrane proton channel, linked together by a central stalk and a peripheral stalk. During catalysis, ATP synthesis in the catalytic domain of F(1) is coupled via a rotary mechanism of the central stalk subunits to proton translocation. Functionally, component of the F(0) channel, it forms part of the peripheral stalk, linking F(1) to F(0). This is ATP synthase subunit b from Chlorobaculum parvum (strain DSM 263 / NCIMB 8327) (Chlorobium vibrioforme subsp. thiosulfatophilum).